The chain runs to 211 residues: MSGQSKYYDYYMVEGEDVKELIQSYDTINDQRNSILTTAAEKVGAIAWTTARSWGGEGGLLQSFVWEKGYEFPCQITIKREDFLDGKRVVIARGKGNTKEGRAYNKELDAIMHNANAKLKSLPEWNYYITNHYGIMRTGIGGQSGRGFGFVMLSTYGGKHPQRDDCLIFAIPNNKEERHGVVVIPDAFKKITYGQFYDIANAKEDEEETAE.

The polypeptide is Eac protein (eac) (Salmonella typhimurium (Bacteriophage P22)).